The following is a 445-amino-acid chain: Putative diacyglycerol O-acyltransferase Rv2285 (445 aa).

H135 acts as the Proton acceptor in catalysis.

This sequence belongs to the long-chain O-acyltransferase family.

It catalyses the reaction an acyl-CoA + a 1,2-diacyl-sn-glycerol = a triacyl-sn-glycerol + CoA. The enzyme catalyses di-(9Z)-octadecenoylglycerol + (9Z)-octadecenoyl-CoA = 1,2,3-tri-(9Z-octadecenoyl)-glycerol + CoA. It functions in the pathway glycerolipid metabolism; triacylglycerol biosynthesis. Functionally, catalyzes the terminal and only committed step in triacylglycerol synthesis by using diacylglycerol and fatty acyl CoA as substrates. Required for storage lipid synthesis. In terms of biological role, upon expression in E.coli functions weakly as a triacylglycerol synthase, making triacylglycerol (TG) from diolein and long-chain fatty acyl-CoA. Has very weak wax synthase activity, incorporating palmityl alcohol into wax esters in the presence of palmitoyl-CoA. The sequence is that of Putative diacyglycerol O-acyltransferase Rv2285 from Mycobacterium tuberculosis (strain ATCC 25618 / H37Rv).